Consider the following 148-residue polypeptide: 3-dehydroquinate dehydratase (148 aa).

The Proton acceptor role is filled by Tyr23. The substrate site is built by Asn75, His81, and Asp88. His101 functions as the Proton donor in the catalytic mechanism. Substrate-binding positions include 102 to 103 and Arg112; that span reads LS.

The protein belongs to the type-II 3-dehydroquinase family. In terms of assembly, homododecamer.

The catalysed reaction is 3-dehydroquinate = 3-dehydroshikimate + H2O. It functions in the pathway metabolic intermediate biosynthesis; chorismate biosynthesis; chorismate from D-erythrose 4-phosphate and phosphoenolpyruvate: step 3/7. Its function is as follows. Catalyzes a trans-dehydration via an enolate intermediate. The polypeptide is 3-dehydroquinate dehydratase (Xanthomonas campestris pv. campestris (strain 8004)).